A 774-amino-acid chain; its full sequence is Ent-beyerene synthase KSL4, chloroplastic (774 aa).

The transit peptide at 1–35 directs the protein to the chloroplast; the sequence is MLLGSTNTLRISSHGKEWEGKTLTGMPLGKVNQRV. Mg(2+)-binding residues include Asp525, Asp529, Asn668, Asp669, Thr672, and Glu676. The short motif at 525-529 is the DDXXD motif element; the sequence is DDFFD.

Belongs to the terpene synthase family. It depends on Mg(2+) as a cofactor.

The protein localises to the plastid. The protein resides in the chloroplast. It carries out the reaction ent-copalyl diphosphate = ent-beyerene + diphosphate. The catalysed reaction is ent-copalyl diphosphate = ent-atiserene + diphosphate. The enzyme catalyses ent-copalyl diphosphate = ent-kaur-16-ene + diphosphate. It functions in the pathway secondary metabolite biosynthesis; terpenoid biosynthesis. Its function is as follows. Diterpene cyclase involved in the biosynthesis of labdane-related diterpenoids (LRDs) natural products. Catalyzes the cyclization of ent-CDP into ent-beyerene as a major and ent-kaurene and ent-atiserene as minor products. The polypeptide is Ent-beyerene synthase KSL4, chloroplastic (Ricinus communis (Castor bean)).